The primary structure comprises 282 residues: 4-diphosphocytidyl-2-C-methyl-D-erythritol kinase (282 aa).

Lys-12 is a catalytic residue. 95–105 (PMGGGIGGGSS) contributes to the ATP binding site. Asp-137 is an active-site residue.

The protein belongs to the GHMP kinase family. IspE subfamily.

The catalysed reaction is 4-CDP-2-C-methyl-D-erythritol + ATP = 4-CDP-2-C-methyl-D-erythritol 2-phosphate + ADP + H(+). It functions in the pathway isoprenoid biosynthesis; isopentenyl diphosphate biosynthesis via DXP pathway; isopentenyl diphosphate from 1-deoxy-D-xylulose 5-phosphate: step 3/6. Functionally, catalyzes the phosphorylation of the position 2 hydroxy group of 4-diphosphocytidyl-2C-methyl-D-erythritol. The polypeptide is 4-diphosphocytidyl-2-C-methyl-D-erythritol kinase (Pseudomonas paraeruginosa (strain DSM 24068 / PA7) (Pseudomonas aeruginosa (strain PA7))).